Consider the following 29-residue polypeptide: Cyclotide vibi-B (29 aa).

The segment at residues 1-29 is a cross-link (cyclopeptide (Gly-Asn)); the sequence is GLPVCGETCFGGTCNTPGCTCSYPICTRN. Cystine bridges form between C5-C19, C9-C21, and C14-C26.

In terms of processing, this is a cyclic peptide.

Probably participates in a plant defense mechanism. In Viola biflora (Yellow wood violet), this protein is Cyclotide vibi-B.